The primary structure comprises 105 residues: Met repressor (105 aa).

It belongs to the MetJ family. In terms of assembly, homodimer.

The protein resides in the cytoplasm. Its function is as follows. This regulatory protein, when combined with SAM (S-adenosylmethionine) represses the expression of the methionine regulon and of enzymes involved in SAM synthesis. The protein is Met repressor of Vibrio vulnificus (strain CMCP6).